The chain runs to 78 residues: Cytochrome c oxidase subunit 6b-2 (78 aa).

Positions 22–65 constitute a CHCH domain; sequence TRHCFTRYIEFHRCTTAKGEESNDCERFAKYYRALCPGEWVDKW. The Cx9C motif signature appears at 25–35; sequence CFTRYIEFHRC. 2 disulfides stabilise this stretch: Cys25/Cys57 and Cys35/Cys46. Residues 46 to 57 carry the Cx10C motif motif; that stretch reads CERFAKYYRALC.

The protein belongs to the cytochrome c oxidase subunit 6B (TC 3.D.4.8) family. In terms of tissue distribution, specifically expressed in roots.

The protein localises to the mitochondrion. Functionally, this protein is one of the nuclear-coded polypeptide chains of cytochrome c oxidase, the terminal oxidase in mitochondrial electron transport. This protein may be one of the heme-binding subunits of the oxidase. The sequence is that of Cytochrome c oxidase subunit 6b-2 (COX6B-2) from Arabidopsis thaliana (Mouse-ear cress).